Reading from the N-terminus, the 574-residue chain is uncharacterized protein (574 aa).

Residues 297 to 327 (STASKSKKRRKDEVSGAQRNSSPLPQDAVSS) are disordered. Residues 313–327 (AQRNSSPLPQDAVSS) show a composition bias toward polar residues.

This is an uncharacterized protein from Macaca fascicularis (Crab-eating macaque).